A 316-amino-acid chain; its full sequence is C-type lectin domain family 10 member A (316 aa).

Residues 1–39 (MTRTYENFQYLENKVKVQGFKNGPLPLQSLLQRLCSGPC) lie on the Cytoplasmic side of the membrane. Residues 5–8 (YENF) carry the Endocytosis signal motif. A helical; Signal-anchor for type II membrane protein transmembrane segment spans residues 40–60 (HLLLSLGLGLLLLVIICVVGF). The Extracellular segment spans residues 61 to 316 (QNSKFQRDLV…GLGQTSQESH (256 aa)). Asparagine 78 and asparagine 173 each carry an N-linked (GlcNAc...) asparagine glycan. A coiled-coil region spans residues 85-176 (AEIQALTSQG…VATLNNNAST (92 aa)). 3 disulfide bridges follow: cysteine 181/cysteine 192, cysteine 209/cysteine 304, and cysteine 282/cysteine 296. One can recognise a C-type lectin domain in the interval 188–305 (HQDSCYWFSH…CQRPYHWVCE (118 aa)). Residues valine 218, asparagine 220, glutamate 224, and aspartate 243 each coordinate Ca(2+). The a glycoprotein site is built by glutamine 267 and aspartate 269. Positions 269, 270, 280, and 281 each coordinate Ca(2+). Glutamate 280 is an a glycoprotein binding site. Residues histidine 286 and asparagine 292 each coordinate a glycoprotein. Ca(2+)-binding residues include asparagine 292, aspartate 293, and glutamate 305.

As to quaternary structure, interacts with A-, B- and C-domain containing PTPRC/CD45 isoforms: isoform 1/CD45ABC, isoform 3/CD45AB, isoform 5/CD45BC and isoform 7/CD45B. Does not interact with PTPRC/CD45 isoform 2/CD45RO, a memory T cell marker. In terms of tissue distribution, expressed in myeloid antigen presenting cells in lymph nodes and skin (at protein level). Expressed in dermal dendritic cells (at protein level).

The protein resides in the cell membrane. It is found in the early endosome membrane. The protein localises to the lysosome membrane. Functionally, C-type lectin receptor involved in recognition of N-acetylgalactosamine (GalNAc)-terminated glycans by myeloid antigen presenting cells (APCs). Binds in a Ca(2+)-dependent manner to alpha- and beta-linked GalNAc residues on glycoprotein and glycolipid antigens, including alphaGalNAc- and Galbeta1-&gt;3GalNAc-O-Ser/Thr also known as Tn and T antigens, LacdiNAc epitope GalNAcbeta1-&gt;4GlcNAc and its derivative GalNAcbeta1-&gt;4-(Fucalpha1-&gt;3)GlcNAc, O-linked core 5 and 6 glycans, and GM2 and GD2 gangliosides. Acts as a signaling receptor at the interface of APC-T cell interactions. On immature dendritic cells, recognizes Tn antigen-carrying PTPRC/CD45 receptor on effector T cells and downregulates PTRPN/CD45 phosphatase activity with an impact on T cell activation threshold, cytokine production and proliferation. Modulates dendritic cell maturation toward a tolerogenic phenotype leading to generation of regulatory CD4-positive T cell subset with immune suppressive functions. Acts as an endocytic pattern recognition receptor involved in antitumor immunity. During tumorigenesis, recognizes Tn antigens and its sialylated forms Neu5Ac-Tn and Neu5Gc-Tn expressed on tumor cell mucins. On immature dendritic cells, can internalize Tn-terminated immunogens and target them to endolysosomal compartment for MHC class I and II antigen presentation to CD8-positive and CD4-positive T cells, respectively. The chain is C-type lectin domain family 10 member A from Homo sapiens (Human).